A 383-amino-acid polypeptide reads, in one-letter code: 8-amino-7-oxononanoate synthase (383 aa).

Arginine 21 serves as a coordination point for substrate. 108–109 (GY) is a pyridoxal 5'-phosphate binding site. Substrate is bound at residue histidine 133. 3 residues coordinate pyridoxal 5'-phosphate: serine 179, histidine 207, and threonine 233. Lysine 236 carries the post-translational modification N6-(pyridoxal phosphate)lysine. A substrate-binding site is contributed by threonine 350.

It belongs to the class-II pyridoxal-phosphate-dependent aminotransferase family. BioF subfamily. In terms of assembly, homodimer. It depends on pyridoxal 5'-phosphate as a cofactor.

The enzyme catalyses 6-carboxyhexanoyl-[ACP] + L-alanine + H(+) = (8S)-8-amino-7-oxononanoate + holo-[ACP] + CO2. It functions in the pathway cofactor biosynthesis; biotin biosynthesis. Catalyzes the decarboxylative condensation of pimeloyl-[acyl-carrier protein] and L-alanine to produce 8-amino-7-oxononanoate (AON), [acyl-carrier protein], and carbon dioxide. In Yersinia pestis bv. Antiqua (strain Angola), this protein is 8-amino-7-oxononanoate synthase.